The sequence spans 847 residues: Cancer-associated gene 1 protein homolog (847 aa).

The segment at 118–161 is disordered; the sequence is EEKPELQSQVYNDPADASQKPDPLKEESLMESSTSENKDELVHE. Residues 377–567 adopt a coiled-coil conformation; the sequence is NVILEKNDIN…AAKREAQACT (191 aa).

The sequence is that of Cancer-associated gene 1 protein homolog (Cage1) from Rattus norvegicus (Rat).